The chain runs to 442 residues: DNA topoisomerase medium subunit (442 aa).

Positions 29-438 (IPNMIDGFKP…DVVTEYTKDL (410 aa)) constitute a Topo IIA-type catalytic domain. Catalysis depends on Tyr-117, which acts as the O-(5'-phospho-DNA)-tyrosine intermediate.

This sequence belongs to the type II topoisomerase family. Part of the DNA topoisomerase complex made of gp39, gp52 and gp60. It depends on Mg(2+) as a cofactor.

It catalyses the reaction ATP-dependent breakage, passage and rejoining of double-stranded DNA.. Its function is as follows. Medium subunit of the DNA topoisomerase that untwists superhelical DNA. Controls topological states of double-stranded DNA by transient breakage and subsequent rejoining of DNA strands. In Enterobacteria phage T4 (Bacteriophage T4), this protein is DNA topoisomerase medium subunit (52).